The primary structure comprises 430 residues: Na(+)/H(+) antiporter NhaA 2 (430 aa).

The next 10 helical transmembrane spans lie at 11–31 (FVHG…IAFI), 60–80 (LSLE…LVGL), 97–117 (VALA…LYTA), 127–147 (GWGV…ALLG), 181–201 (LNLT…YAGW), 215–235 (VLLW…GVLL), 288–308 (HALH…TNAG), 309–329 (VPVA…GLLL), 356–376 (WGHM…SLFV), and 393–413 (GVLL…LLGI).

Belongs to the NhaA Na(+)/H(+) (TC 2.A.33) antiporter family.

The protein resides in the cell membrane. The enzyme catalyses Na(+)(in) + 2 H(+)(out) = Na(+)(out) + 2 H(+)(in). Na(+)/H(+) antiporter that extrudes sodium in exchange for external protons. The protein is Na(+)/H(+) antiporter NhaA 2 of Deinococcus geothermalis (strain DSM 11300 / CIP 105573 / AG-3a).